We begin with the raw amino-acid sequence, 207 residues long: Adenylyl-sulfate kinase (207 aa).

ATP is bound at residue 34 to 41 (GLSGSGKS). Serine 108 functions as the Phosphoserine intermediate in the catalytic mechanism.

Belongs to the APS kinase family.

It carries out the reaction adenosine 5'-phosphosulfate + ATP = 3'-phosphoadenylyl sulfate + ADP + H(+). The protein operates within sulfur metabolism; hydrogen sulfide biosynthesis; sulfite from sulfate: step 2/3. Functionally, catalyzes the synthesis of activated sulfate. This Lactiplantibacillus plantarum (strain ATCC BAA-793 / NCIMB 8826 / WCFS1) (Lactobacillus plantarum) protein is Adenylyl-sulfate kinase.